The following is a 273-amino-acid chain: Arginine and glutamate-rich protein 1 (273 aa).

Composition is skewed to basic residues over residues M1–S29 and V37–S58. A necessary and sufficient for RNA binding region spans residues M1–R74. The tract at residues M1 to Q113 is disordered. Phosphoserine is present on residues S58 and S60. T61 carries the post-translational modification Phosphothreonine. Composition is skewed to basic and acidic residues over residues S66–I84 and S93–Q113. The interval A75–D273 is necessary and sufficient for transcriptional regulation. Residues S76 and S77 each carry the phosphoserine modification. Positions L172–L176 match the LXXLL motif 1; degenerate motif. Residues L201–L205 carry the LXXLL motif 2; degenerate motif. The segment covering M238–K253 has biased composition (basic and acidic residues). The tract at residues M238–D273 is disordered. S266 bears the Phosphoserine mark.

This sequence belongs to the ARGLU1 family. Interacts with MED1; the interaction is direct. Interacts with PUF60, U2AF2 and JMJD6; may interact with other proteins involved in RNA processing and splicing.

The protein resides in the nucleus. It is found in the nucleus speckle. It localises to the chromosome. In terms of biological role, dual function regulator of gene expression; regulator of transcription and modulator of alternative splicing. General coactivator of nuclear receptor-induced gene expression, including genes activated by the glucocorticoid receptor NR3C1. Binds to a subset of pre-mRNAs and to components of the spliceosome machinery to directly modulate basal alternative splicing; involved in simple and complex cassette exon splicing events. Binds its own pre-mRNA and regulates its alternative splicing and degradation; one of the alternatively spliced products is a stable intronic sequence RNA (sisRNA) that binds the protein to regulate its ability to affect splicing. Binding of the sisRNA stimulates phase separation and localization to nuclear speckles, which may contribute to activation of nuclear receptor-induced gene expression. May also indirectly modulate alternative splicing. Regulates transcription of genes involved in heart development, neuronal cell function, protein localization and chromatin localization. Regulates splicing of genes involved in neurogenesis and chromatin organization. Essential for central nervous system development. Required for the estrogen-dependent expression of ESR1 target genes. Can act in cooperation with MED1. This is Arginine and glutamate-rich protein 1 (ARGLU1) from Bos taurus (Bovine).